We begin with the raw amino-acid sequence, 427 residues long: 3-phosphoshikimate 1-carboxyvinyltransferase (427 aa).

Positions 20, 21, and 25 each coordinate 3-phosphoshikimate. A phosphoenolpyruvate-binding site is contributed by Lys-20. Residues Gly-92 and Arg-120 each contribute to the phosphoenolpyruvate site. Ser-166, Gln-168, Asp-312, and Lys-339 together coordinate 3-phosphoshikimate. Gln-168 serves as a coordination point for phosphoenolpyruvate. The active-site Proton acceptor is the Asp-312. Residues Arg-343 and Arg-385 each contribute to the phosphoenolpyruvate site.

Belongs to the EPSP synthase family. Monomer.

The protein localises to the cytoplasm. It carries out the reaction 3-phosphoshikimate + phosphoenolpyruvate = 5-O-(1-carboxyvinyl)-3-phosphoshikimate + phosphate. It functions in the pathway metabolic intermediate biosynthesis; chorismate biosynthesis; chorismate from D-erythrose 4-phosphate and phosphoenolpyruvate: step 6/7. Its function is as follows. Catalyzes the transfer of the enolpyruvyl moiety of phosphoenolpyruvate (PEP) to the 5-hydroxyl of shikimate-3-phosphate (S3P) to produce enolpyruvyl shikimate-3-phosphate and inorganic phosphate. The polypeptide is 3-phosphoshikimate 1-carboxyvinyltransferase (Streptococcus gordonii (strain Challis / ATCC 35105 / BCRC 15272 / CH1 / DL1 / V288)).